The following is a 190-amino-acid chain: Protein GrpE (190 aa).

Residues 1–42 (MNEKDNQTTSEPENEQEIIDVNDSGEQPEENETEQPQEEAVE) form a disordered region. The segment covering 26–42 (EQPEENETEQPQEEAVE) has biased composition (acidic residues).

It belongs to the GrpE family. As to quaternary structure, homodimer.

The protein resides in the cytoplasm. Functionally, participates actively in the response to hyperosmotic and heat shock by preventing the aggregation of stress-denatured proteins, in association with DnaK and GrpE. It is the nucleotide exchange factor for DnaK and may function as a thermosensor. Unfolded proteins bind initially to DnaJ; upon interaction with the DnaJ-bound protein, DnaK hydrolyzes its bound ATP, resulting in the formation of a stable complex. GrpE releases ADP from DnaK; ATP binding to DnaK triggers the release of the substrate protein, thus completing the reaction cycle. Several rounds of ATP-dependent interactions between DnaJ, DnaK and GrpE are required for fully efficient folding. This Oceanobacillus iheyensis (strain DSM 14371 / CIP 107618 / JCM 11309 / KCTC 3954 / HTE831) protein is Protein GrpE.